We begin with the raw amino-acid sequence, 185 residues long: MIDDTLLEAEEKMDKAVSVAKDDFANIRTGRITPAVFGKVLVDYYGAPTPVQQLASFHIPEPRMVIITPYDKSSLGAVEKAVRDSDLGVNPSNDGTIIRCVFPELSEQRRRDLVKVARTKAEEARVSIRNIRRHAKDAIDRIVRDGEAGEDEGRRGEKDLDEATHRYVSQVDELLRIKESDLLSV.

This sequence belongs to the RRF family.

Its subcellular location is the cytoplasm. In terms of biological role, responsible for the release of ribosomes from messenger RNA at the termination of protein biosynthesis. May increase the efficiency of translation by recycling ribosomes from one round of translation to another. In Parafrankia sp. (strain EAN1pec), this protein is Ribosome-recycling factor.